The primary structure comprises 552 residues: Hyaluronan synthase 2 (552 aa).

The Cytoplasmic segment spans residues 1–11; the sequence is MYCERFICILR. The helical transmembrane segment at 12–32 threads the bilayer; sequence ILGTTLFGVSLLLGITAAYIV. Topologically, residues 33-45 are extracellular; the sequence is GYQFIQTDNYYFS. The chain crosses the membrane as a helical span at residues 46–66; it reads FGLYGAILASHLIIQSLFAYL. The Cytoplasmic segment spans residues 67-374; it reads EHRKMKRSLE…NAMWFHKHHL (308 aa). Residues 375 to 395 form a helical membrane-spanning segment; the sequence is WMTYEAVITGFFPFFLIATVI. Over 396-402 the chain is Extracellular; it reads QLFYRGK. Residues 403–423 form a helical membrane-spanning segment; sequence IWNILLFLLTVQLVGLIKSSF. Residues 424–429 lie on the Cytoplasmic side of the membrane; that stretch reads ASFLRG. Residues 430 to 450 form a helical membrane-spanning segment; it reads NIVMVFMSLYSVLYMSSLLPA. Topologically, residues 451–475 are extracellular; it reads KMFAIATINKAGWGTSGRKTIVVNF. Residues 476–496 form a helical membrane-spanning segment; it reads IGLIPVSIWFTILLGRVIFTI. The Cytoplasmic segment spans residues 497–510; the sequence is YKESKKPFSESKTT. Residues 511-531 form a helical membrane-spanning segment; the sequence is VLVIGTILYACYWVLLLTLYL. The Extracellular segment spans residues 532-552; the sequence is VLITKCGRRKKEQHYDMVLDV.

It belongs to the NodC/HAS family. As to quaternary structure, homodimer; dimerization promotes enzymatic activity. The cofactor is Mg(2+).

The protein localises to the cell membrane. The protein resides in the endoplasmic reticulum membrane. It is found in the vesicle. Its subcellular location is the golgi apparatus membrane. It localises to the lysosome. The enzyme catalyses [hyaluronan](n) + UDP-N-acetyl-alpha-D-glucosamine = N-acetyl-beta-D-glucosaminyl-(1-&gt;4)-[hyaluronan](n) + UDP + H(+). The catalysed reaction is N-acetyl-beta-D-glucosaminyl-(1-&gt;4)-[hyaluronan](n) + UDP-alpha-D-glucuronate = [hyaluronan](n+1) + UDP + H(+). The protein operates within glycan biosynthesis; hyaluronan biosynthesis. Its function is as follows. Catalyzes the addition of GlcNAc or GlcUA monosaccharides to the nascent hyaluronan polymer. Therefore, it is essential to hyaluronan synthesis a major component of most extracellular matrices that has a structural role in tissues architectures and regulates cell adhesion, migration and differentiation. This is one of three isoenzymes responsible for cellular hyaluronan synthesis and it is particularly responsible for the synthesis of high molecular mass hyaluronan. The chain is Hyaluronan synthase 2 (HAS2) from Gallus gallus (Chicken).